Reading from the N-terminus, the 135-residue chain is Holo-[acyl-carrier-protein] synthase (135 aa).

Mg(2+) contacts are provided by D7 and E57.

Belongs to the P-Pant transferase superfamily. AcpS family. The cofactor is Mg(2+).

It localises to the cytoplasm. It carries out the reaction apo-[ACP] + CoA = holo-[ACP] + adenosine 3',5'-bisphosphate + H(+). Its function is as follows. Transfers the 4'-phosphopantetheine moiety from coenzyme A to a Ser of acyl-carrier-protein. The sequence is that of Holo-[acyl-carrier-protein] synthase from Corynebacterium glutamicum (strain ATCC 13032 / DSM 20300 / JCM 1318 / BCRC 11384 / CCUG 27702 / LMG 3730 / NBRC 12168 / NCIMB 10025 / NRRL B-2784 / 534).